Reading from the N-terminus, the 543-residue chain is CTP synthase (543 aa).

Residues methionine 1–isoleucine 265 form an amidoligase domain region. Serine 13 provides a ligand contact to CTP. Serine 13 provides a ligand contact to UTP. ATP is bound at residue serine 14–leucine 19. Residue tyrosine 54 participates in L-glutamine binding. Aspartate 71 contributes to the ATP binding site. Residues aspartate 71 and glutamate 139 each coordinate Mg(2+). CTP is bound by residues aspartate 146 to glutamate 148, lysine 186 to glutamine 191, and lysine 222. Residues lysine 186–glutamine 191 and lysine 222 contribute to the UTP site. Arginine 238–valine 240 provides a ligand contact to ATP. In terms of domain architecture, Glutamine amidotransferase type-1 spans threonine 291–leucine 542. Residue glycine 353 participates in L-glutamine binding. The active-site Nucleophile; for glutamine hydrolysis is the cysteine 380. L-glutamine-binding positions include phenylalanine 381–glutamine 384, glutamate 404, and arginine 470. Residues histidine 515 and glutamate 517 contribute to the active site.

It belongs to the CTP synthase family. In terms of assembly, homotetramer.

It catalyses the reaction UTP + L-glutamine + ATP + H2O = CTP + L-glutamate + ADP + phosphate + 2 H(+). It carries out the reaction L-glutamine + H2O = L-glutamate + NH4(+). The catalysed reaction is UTP + NH4(+) + ATP = CTP + ADP + phosphate + 2 H(+). It participates in pyrimidine metabolism; CTP biosynthesis via de novo pathway; CTP from UDP: step 2/2. Allosterically activated by GTP, when glutamine is the substrate; GTP has no effect on the reaction when ammonia is the substrate. The allosteric effector GTP functions by stabilizing the protein conformation that binds the tetrahedral intermediate(s) formed during glutamine hydrolysis. Inhibited by the product CTP, via allosteric rather than competitive inhibition. In terms of biological role, catalyzes the ATP-dependent amination of UTP to CTP with either L-glutamine or ammonia as the source of nitrogen. Regulates intracellular CTP levels through interactions with the four ribonucleotide triphosphates. In Rhodopseudomonas palustris (strain BisB18), this protein is CTP synthase.